Reading from the N-terminus, the 215-residue chain is MGVRLRVWPAAPHSISRCPRPLGAVLSILLAGGSRKGTPTARCLGQRTKEKRVGGRSLRSEAGSGPCPTAGAQPTAPSSAWPPRLRPRTCPQMSGELPRVRPTRVGLSSLGSGPGHPPSGTRMCGERARNRRGRARRLTPEQPRIGASAGPGPPLPPARPRCSGSCHLPRPPQHLSPPQPGRVRMGAAEGSRRADTHHARRRRRARLPAPRSAST.

The disordered stretch occupies residues 35–215 (RKGTPTARCL…RLPAPRSAST (181 aa)). The segment covering 169 to 180 (PRPPQHLSPPQP) has biased composition (pro residues). Positions 185–215 (MGAAEGSRRADTHHARRRRRARLPAPRSAST) are necessary for nucleolar localization.

In terms of tissue distribution, widely expressed.

The protein resides in the nucleus. It localises to the nucleolus. In terms of biological role, apoptosis-inducing protein that modulates the tumor suppressor function of CDKN2A/p14ARF. Enhances the stability of CDKN2A/p14ARF protein by protecting it from degradation. May act as a tumor suppressor. In Homo sapiens (Human), this protein is Proapoptotic nucleolar protein 1.